Reading from the N-terminus, the 490-residue chain is 23S rRNA (uracil(1939)-C(5))-methyltransferase RlmD (490 aa).

One can recognise a TRAM domain in the interval 14–75 (APAPAEYPID…SSFEKATLTA (62 aa)). Cys88, Cys98, Cys101, and Cys180 together coordinate [4Fe-4S] cluster. S-adenosyl-L-methionine is bound by residues Gln289, Phe318, Asn323, Glu339, Asn374, and Asp395. The active-site Nucleophile is the Cys446.

It belongs to the class I-like SAM-binding methyltransferase superfamily. RNA M5U methyltransferase family. RlmD subfamily.

It carries out the reaction uridine(1939) in 23S rRNA + S-adenosyl-L-methionine = 5-methyluridine(1939) in 23S rRNA + S-adenosyl-L-homocysteine + H(+). Functionally, catalyzes the formation of 5-methyl-uridine at position 1939 (m5U1939) in 23S rRNA. The polypeptide is 23S rRNA (uracil(1939)-C(5))-methyltransferase RlmD (Polaromonas naphthalenivorans (strain CJ2)).